The primary structure comprises 203 residues: Na(+)-translocating NADH-quinone reductase subunit E (203 aa).

6 helical membrane-spanning segments follow: residues 12–32 (AVFVENMALAFFLGMCTFLAL), 36–56 (MEAAIGLGIAVVVVLSVTVPV), 82–102 (FLGLLTYIGVIAAIVQILEMV), 115–135 (GVFLPLITVNCAIMGASLFMV), 145–165 (LVYGFGAGLGWALAIIALAGI), and 181–201 (LGITFITVGLMSLGFMSFSGI).

It belongs to the NqrDE/RnfAE family. Composed of six subunits; NqrA, NqrB, NqrC, NqrD, NqrE and NqrF.

Its subcellular location is the cell inner membrane. It catalyses the reaction a ubiquinone + n Na(+)(in) + NADH + H(+) = a ubiquinol + n Na(+)(out) + NAD(+). NQR complex catalyzes the reduction of ubiquinone-1 to ubiquinol by two successive reactions, coupled with the transport of Na(+) ions from the cytoplasm to the periplasm. NqrA to NqrE are probably involved in the second step, the conversion of ubisemiquinone to ubiquinol. This is Na(+)-translocating NADH-quinone reductase subunit E from Hahella chejuensis (strain KCTC 2396).